The primary structure comprises 528 residues: Glucose-6-phosphate isomerase (528 aa).

Glu322 (proton donor) is an active-site residue. Active-site residues include His351 and Lys455.

This sequence belongs to the GPI family.

The protein localises to the cytoplasm. The enzyme catalyses alpha-D-glucose 6-phosphate = beta-D-fructose 6-phosphate. Its pathway is carbohydrate biosynthesis; gluconeogenesis. It functions in the pathway carbohydrate degradation; glycolysis; D-glyceraldehyde 3-phosphate and glycerone phosphate from D-glucose: step 2/4. Its function is as follows. Catalyzes the reversible isomerization of glucose-6-phosphate to fructose-6-phosphate. The protein is Glucose-6-phosphate isomerase of Nostoc sp. (strain PCC 7120 / SAG 25.82 / UTEX 2576).